A 401-amino-acid chain; its full sequence is SVP1-like protein 2 (401 aa).

WD repeat units follow at residues 222-262 (AHKN…LIHE) and 267-306 (LDRA…DKRH).

It belongs to the WD repeat PROPPIN family.

The protein localises to the vacuole membrane. It is found in the cytoplasmic vesicle membrane. Functionally, involved in mitochondrial or peroxisomal functions and amino acid signaling pathways. The chain is SVP1-like protein 2 (HSV2) from Eremothecium gossypii (strain ATCC 10895 / CBS 109.51 / FGSC 9923 / NRRL Y-1056) (Yeast).